We begin with the raw amino-acid sequence, 283 residues long: Calpastatin (283 aa).

The segment covering methionine 1–methionine 15 has biased composition (polar residues). Disordered stretches follow at residues methionine 1 to methionine 186 and asparagine 212 to lysine 283. Basic residues predominate over residues proline 21–alanine 30. A Glycyl lysine isopeptide (Lys-Gly) (interchain with G-Cter in SUMO2) cross-link involves residue lysine 32. Positions valine 46–serine 65 are enriched in basic and acidic residues. Position 50 is an N6-acetyllysine (lysine 50). Residue serine 87 is modified to Phosphoserine. A compositionally biased stretch (low complexity) spans valine 107 to glycine 122. At serine 133 the chain carries Phosphoserine. Threonine 135 is modified (phosphothreonine). The stretch at isoleucine 170–serine 222 is one Inhibitory domain 1 repeat. Phosphoserine is present on residues serine 222 and serine 243. Over residues lysine 249–glutamate 258 the composition is skewed to basic and acidic residues.

Belongs to the protease inhibitor I27 (calpastatin) family.

Specific inhibition of calpain (calcium-dependent cysteine protease). Plays a key role in postmortem tenderization of meat and have been proposed to be involved in muscle protein degradation in living tissue. The polypeptide is Calpastatin (CAST) (Chlorocebus aethiops (Green monkey)).